Reading from the N-terminus, the 488-residue chain is MGDRGSSRRRRTGSRPSSHGGGGPAAAEEEVRDAAAGPDVGAAGDAPAPAPNKDGDAGVGSGHWELRCHRLQDSLFSSDSGFSNYRGILNWCVVMLILSNARLFLENLIKYGILVDPIQVVSLFLKDPYSWPAPCLVIAANVFAVAAFQVEKRLAVGALTEQAGLLLHVANLATILCFPAAVVLLVESITPVGSLLALMAHTILFLKLFSYRDVNSWCRRARAKAASAGKKASSAAAPHTVSYPDNLTYRDLYYFLFAPTLCYELNFPRSPRIRKRFLLRRILEMLFFTQLQVGLIQQWMVPTIQNSMKPFKDMDYSRIIERLLKLAVPNHLIWLIFFYWLFHSCLNAVAELMQFGDREFYRDWWNSESVTYFWQNWNIPVHKWCIRHFYKPMLRRGSSKWMARTGVFLASAFFHEYLVSVPLRMFRLWAFTGMMAQIPLAWFVGRFFQGNYGNAAVWLSLIIGQPIAVLMYVHDYYVLNYEAPAAEA.

The disordered stretch occupies residues 1–57 (MGDRGSSRRRRTGSRPSSHGGGGPAAAEEEVRDAAAGPDVGAAGDAPAPAPNKDGDA). Residues 1–83 (MGDRGSSRRR…SLFSSDSGFS (83 aa)) lie on the Cytoplasmic side of the membrane. Positions 1 to 91 (MGDRGSSRRR…FSNYRGILNW (91 aa)) are involved in homomerization. Residues S17 and S18 each carry the phosphoserine modification. The span at 34–47 (AAAGPDVGAAGDAP) shows a compositional bias: low complexity. The helical transmembrane segment at 84 to 118 (NYRGILNWCVVMLILSNARLFLENLIKYGILVDPI) threads the bilayer. Residues 119-130 (QVVSLFLKDPYS) are Lumenal-facing. Residues 119-130 (QVVSLFLKDPYS) form an extracellular loop 1 (EL1) region. A helical transmembrane segment spans residues 131 to 156 (WPAPCLVIAANVFAVAAFQVEKRLAV). Residues 131–488 (WPAPCLVIAA…LNYEAPAAEA (358 aa)) are MBOAT fold. The Cytoplasmic segment spans residues 157-161 (GALTE). The chain crosses the membrane as a helical span at residues 162–184 (QAGLLLHVANLATILCFPAAVVL). Residues 185–191 (LVESITP) are Lumenal-facing. A helical transmembrane segment spans residues 192 to 223 (VGSLLALMAHTILFLKLFSYRDVNSWCRRARA). Residues 224 to 273 (KAASAGKKASSAAAPHTVSYPDNLTYRDLYYFLFAPTLCYELNFPRSPRI) are Cytoplasmic-facing. Residues 224–276 (KAASAGKKASSAAAPHTVSYPDNLTYRDLYYFLFAPTLCYELNFPRSPRIRKR) form an intracellular loop 1 (IL1) region. A helical membrane pass occupies residues 274 to 308 (RKRFLLRRILEMLFFTQLQVGLIQQWMVPTIQNSM). Topologically, residues 309–315 (KPFKDMD) are lumenal. A helical membrane pass occupies residues 316–353 (YSRIIERLLKLAVPNHLIWLIFFYWLFHSCLNAVAELM). Residues 354–399 (QFGDREFYRDWWNSESVTYFWQNWNIPVHKWCIRHFYKPMLRRGSS) are Cytoplasmic-facing. An intracellular loop 2 (IL2) region spans residues 354–399 (QFGDREFYRDWWNSESVTYFWQNWNIPVHKWCIRHFYKPMLRRGSS). An FYXDWWN motif motif is present at residues 360 to 366 (FYRDWWN). An acyl-CoA-binding positions include 374-382 (WQNWNIPVH), Y390, and R404. The segment at 380 to 394 (PVHKWCIRHFYKPML) is amphipathic helix (AH). Residues 400 to 420 (KWMARTGVFLASAFFHEYLVS) form a helical membrane-spanning segment. H415 is an active-site residue. Topologically, residues 421–428 (VPLRMFRL) are lumenal. The helical transmembrane segment at 429 to 447 (WAFTGMMAQIPLAWFVGRF) threads the bilayer. Residues 448–449 (FQ) are Cytoplasmic-facing. The helical transmembrane segment at 450-481 (GNYGNAAVWLSLIIGQPIAVLMYVHDYYVLNY) threads the bilayer. An an acyl-CoA-binding site is contributed by Y477. Topologically, residues 482-488 (EAPAAEA) are lumenal.

Belongs to the membrane-bound acyltransferase family. Sterol o-acyltransferase subfamily. Homodimer or homotetramer; both forms have similar enzymatic activities.

It is found in the endoplasmic reticulum membrane. The catalysed reaction is an acyl-CoA + a 1,2-diacyl-sn-glycerol = a triacyl-sn-glycerol + CoA. The enzyme catalyses all-trans-retinol + an acyl-CoA = an all-trans-retinyl ester + CoA. It carries out the reaction 2-(9Z-octadecenoyl)-glycerol + (9Z)-octadecenoyl-CoA = 1,2-di-(9Z-octadecenoyl)-sn-glycerol + CoA. It catalyses the reaction 1,2-di-(9Z-octadecenoyl)-sn-glycerol + (9Z)-octadecenoyl-CoA = 1,2,3-tri-(9Z-octadecenoyl)-glycerol + CoA. The catalysed reaction is all-trans-retinol + hexadecanoyl-CoA = all-trans-retinyl hexadecanoate + CoA. The enzyme catalyses 1-O-(9Z-octadecenyl)-glycerol + (9Z)-octadecenoyl-CoA = 1-O-(9Z-octadecyl)-3-(9Z-octadecenoyl)-glycerol + CoA. It carries out the reaction 1-O-(9Z-octadecyl)-3-(9Z-octadecenoyl)-glycerol + (9Z)-octadecenoyl-CoA = 1-O-(9Z-octadecenyl)-2,3-di-(9Z-octadecenoyl)glycerol + CoA. It catalyses the reaction 1-(9Z-octadecenoyl)-glycerol + (9Z)-octadecenoyl-CoA = 1,2-di-(9Z-octadecenoyl)-glycerol + CoA. The catalysed reaction is 1,2-di-(9Z-octadecenoyl)-glycerol + (9Z)-octadecenoate + H(+) = 1,2,3-tri-(9Z-octadecenoyl)-glycerol + H2O. The enzyme catalyses 1-octadecanoyl-2-(5Z,8Z,11Z,14Z-eicosatetraenoyl)-sn-glycerol + (9Z)-octadecenoyl-CoA = 1-octadecanoyl-2-(5Z,8Z,11Z,14Z)-eicosatetraenoyl-3-(9Z)-octadecenoyl-sn-glycerol + CoA. It carries out the reaction hexadecane-1,2-diol + 2 hexadecanoyl-CoA = 1,2-O,O-dihexadecanoyl-1,2-hexadecanediol + 2 CoA. It catalyses the reaction hexadecane-1,2-diol + hexadecanoyl-CoA = 2-hydroxyhexadecyl hexadecanoate + CoA. The catalysed reaction is 2-(9Z-octadecenoyl)-glycerol + hexadecanoyl-CoA = 1-hexadecanoyl-2-(9Z-octadecenoyl)-sn-glycerol + CoA. The enzyme catalyses 1,2-di-(9Z-octadecenoyl)-sn-glycerol + hexadecanoyl-CoA = 1,2-di-(9Z)-octadecenoyl-3-hexadecanoyl-sn-glycerol + CoA. It carries out the reaction hexadecan-1-ol + hexadecanoyl-CoA = hexadecanyl hexadecanoate + CoA. It catalyses the reaction 13-cis-retinol + hexadecanoyl-CoA = 13-cis-retinyl hexadecanoate + CoA. The catalysed reaction is 1,3-di-(9Z-octadecenoyl)-glycerol + (9Z)-octadecenoyl-CoA = 1,2,3-tri-(9Z-octadecenoyl)-glycerol + CoA. The enzyme catalyses 2,3-di-(9Z)-octadecenoyl-sn-glycerol + (9Z)-octadecenoyl-CoA = 1,2,3-tri-(9Z-octadecenoyl)-glycerol + CoA. Its pathway is lipid metabolism; glycerolipid metabolism. XP620 is a selective DGAT1 inhibitor. Catalyzes the terminal and only committed step in triacylglycerol synthesis by using diacylglycerol and fatty acyl CoA as substrates. Highly expressed in epithelial cells of the small intestine and its activity is essential for the absorption of dietary fats. In liver, plays a role in esterifying exogenous fatty acids to glycerol, and is required to synthesize fat for storage. Also present in female mammary glands, where it produces fat in the milk. May be involved in VLDL (very low density lipoprotein) assembly. In contrast to DGAT2 it is not essential for survival. Functions as the major acyl-CoA retinol acyltransferase (ARAT) in the skin, where it acts to maintain retinoid homeostasis and prevent retinoid toxicity leading to skin and hair disorders. Exhibits additional acyltransferase activities, includin acyl CoA:monoacylglycerol acyltransferase (MGAT), wax monoester and wax diester synthases. Also able to use 1-monoalkylglycerol (1-MAkG) as an acyl acceptor for the synthesis of monoalkyl-monoacylglycerol (MAMAG). The polypeptide is Diacylglycerol O-acyltransferase 1 (Homo sapiens (Human)).